Consider the following 99-residue polypeptide: MPVEYYLWLAAILFGIGLLGVLTKRNALILMMSVELMLNAANLTFLAFARRSGDLAGHAIAFFVIAVAAAEAAVGLAVVIAIYRSRGAINVDEVRVLSE.

The next 3 membrane-spanning stretches (helical) occupy residues 2–22 (PVEY…LGVL), 28–48 (LILM…FLAF), and 60–80 (IAFF…AVVI).

It belongs to the complex I subunit 4L family. In terms of assembly, NDH-1 is composed of 14 different subunits. Subunits NuoA, H, J, K, L, M, N constitute the membrane sector of the complex.

The protein localises to the cell inner membrane. The catalysed reaction is a quinone + NADH + 5 H(+)(in) = a quinol + NAD(+) + 4 H(+)(out). Functionally, NDH-1 shuttles electrons from NADH, via FMN and iron-sulfur (Fe-S) centers, to quinones in the respiratory chain. The immediate electron acceptor for the enzyme in this species is believed to be ubiquinone. Couples the redox reaction to proton translocation (for every two electrons transferred, four hydrogen ions are translocated across the cytoplasmic membrane), and thus conserves the redox energy in a proton gradient. The chain is NADH-quinone oxidoreductase subunit K from Anaeromyxobacter dehalogenans (strain 2CP-1 / ATCC BAA-258).